The sequence spans 476 residues: Eukaryotic translation initiation factor 3 subunit L (476 aa).

Residues 257 to 452 (DAIRMFSHIL…DLDYALENDL (196 aa)) enclose the PCI domain.

The protein belongs to the eIF-3 subunit L family. As to quaternary structure, component of the eukaryotic translation initiation factor 3 (eIF-3) complex.

The protein localises to the cytoplasm. Component of the eukaryotic translation initiation factor 3 (eIF-3) complex, which is involved in protein synthesis of a specialized repertoire of mRNAs and, together with other initiation factors, stimulates binding of mRNA and methionyl-tRNAi to the 40S ribosome. The eIF-3 complex specifically targets and initiates translation of a subset of mRNAs involved in cell proliferation. This is Eukaryotic translation initiation factor 3 subunit L from Neosartorya fischeri (strain ATCC 1020 / DSM 3700 / CBS 544.65 / FGSC A1164 / JCM 1740 / NRRL 181 / WB 181) (Aspergillus fischerianus).